A 172-amino-acid polypeptide reads, in one-letter code: Type IV secretion system putative outer membrane lipoprotein BMEII0036 (172 aa).

The signal sequence occupies residues 1–15 (MRTLVMVACAVSLAA). Cys-16 is lipidated: N-palmitoyl cysteine. Cys-16 carries the S-diacylglycerol cysteine lipid modification. The 115-residue stretch at 58-172 (WPARPPKQTV…RRVDIEILRK (115 aa)) folds into the OmpA-like domain.

Its subcellular location is the cell outer membrane. This Brucella melitensis biotype 1 (strain ATCC 23456 / CCUG 17765 / NCTC 10094 / 16M) protein is Type IV secretion system putative outer membrane lipoprotein BMEII0036.